The primary structure comprises 246 residues: Serine protease 1 (246 aa).

The signal sequence occupies residues 1-15; sequence MSALLILALVGAAVA. Residues 16–23 constitute a propeptide, activation peptide; that stretch reads FPLEDDDK. Residues 24 to 244 form the Peptidase S1 domain; that stretch reads IVGGYTCPEH…FVGWIQDTIA (221 aa). 6 disulfide bridges follow: Cys30/Cys160, Cys48/Cys64, Cys132/Cys233, Cys139/Cys206, Cys171/Cys185, and Cys196/Cys220. The active-site Charge relay system is the His63. Ca(2+) is bound by residues Glu75, Asn77, Val80, and Glu85. The active-site Charge relay system is the Asp107. Catalysis depends on Ser200, which acts as the Charge relay system.

It belongs to the peptidase S1 family. Interacts with SERPINA1. It depends on Ca(2+) as a cofactor.

Its subcellular location is the secreted. The protein resides in the extracellular space. It catalyses the reaction Preferential cleavage: Arg-|-Xaa, Lys-|-Xaa.. This chain is Serine protease 1, found in Rattus norvegicus (Rat).